Reading from the N-terminus, the 392-residue chain is Aminomethyltransferase, mitochondrial (392 aa).

Residues 1–16 (MLRAGCRAALARRHLS) constitute a mitochondrion transit peptide. Substrate contacts are provided by E221, R250, and Y388.

The protein belongs to the GcvT family. In terms of assembly, the glycine cleavage system is composed of four proteins: P, T, L and H.

It localises to the mitochondrion. It carries out the reaction N(6)-[(R)-S(8)-aminomethyldihydrolipoyl]-L-lysyl-[protein] + (6S)-5,6,7,8-tetrahydrofolate = N(6)-[(R)-dihydrolipoyl]-L-lysyl-[protein] + (6R)-5,10-methylene-5,6,7,8-tetrahydrofolate + NH4(+). Functionally, the glycine cleavage system catalyzes the degradation of glycine. In Gallus gallus (Chicken), this protein is Aminomethyltransferase, mitochondrial.